The primary structure comprises 78 residues: RNA-binding protein Hfq (78 aa).

The 61-residue stretch at Asp-9–Val-69 folds into the Sm domain.

This sequence belongs to the Hfq family. Homohexamer.

Its function is as follows. RNA chaperone that binds small regulatory RNA (sRNAs) and mRNAs to facilitate mRNA translational regulation in response to envelope stress, environmental stress and changes in metabolite concentrations. Also binds with high specificity to tRNAs. The polypeptide is RNA-binding protein Hfq (Halalkalibacterium halodurans (strain ATCC BAA-125 / DSM 18197 / FERM 7344 / JCM 9153 / C-125) (Bacillus halodurans)).